The following is a 404-amino-acid chain: Phosphoribulokinase, chloroplastic (404 aa).

The N-terminal 53 residues, 1–53 (MAFCSPHTTTSLRSPCTTIPNSGFRQNQVIFFTTRSSRRSNTRHGARTFQVSC), are a transit peptide targeting the chloroplast. A disulfide bridge connects residues cysteine 69 and cysteine 108.

It belongs to the phosphoribulokinase family.

It is found in the plastid. The protein resides in the chloroplast. It carries out the reaction D-ribulose 5-phosphate + ATP = D-ribulose 1,5-bisphosphate + ADP + H(+). It functions in the pathway carbohydrate biosynthesis; Calvin cycle. With respect to regulation, light regulated via thioredoxin by reversible oxidation/reduction of sulfhydryl/disulfide groups. This is Phosphoribulokinase, chloroplastic from Triticum aestivum (Wheat).